A 145-amino-acid chain; its full sequence is MVLMVVVFLLLLFWENELTEDVVLTSIEQLHVDYPQNAVPLRYCNYMILQRVIREPDHRCRKVHVFIHERPQKINRVCTSSKKMSCPNDSDLFCFQSETKFRMTVCQLIDGTTYPACRYQISPIKGFVLVTCDDLGPVDLQGYVE.

An N-terminal signal peptide occupies residues 1 to 19 (MVLMVVVFLLLLFWENELT).

The protein belongs to the pancreatic ribonuclease family.

It localises to the secreted. Functionally, does not exhibit any ribonuclease activity. The chain is Probable inactive ribonuclease-like protein 12 (Rnase12) from Mus musculus (Mouse).